The sequence spans 424 residues: Type II methyltransferase M.BspRI (424 aa).

Positions 58 to 408 constitute an SAM-dependent MTase C5-type domain; the sequence is FNVLSLFCGA…KSIAQFAADY (351 aa). Residue C156 is the S-methylcysteine intermediate of the active site. An S-methylcysteine; by autocatalysis modification is found at C181.

Belongs to the class I-like SAM-binding methyltransferase superfamily. C5-methyltransferase family. In terms of assembly, monomer. Post-translationally, in the absence of DNA, can self-methylate two cysteine residues.

The catalysed reaction is a 2'-deoxycytidine in DNA + S-adenosyl-L-methionine = a 5-methyl-2'-deoxycytidine in DNA + S-adenosyl-L-homocysteine + H(+). Its function is as follows. A methylase, recognizes the double-stranded sequence 5'-GGCC-3', methylates C-3 on both strands, and protects the DNA from cleavage by the BspRI endonuclease. The protein is Type II methyltransferase M.BspRI (bspRIM) of Lysinibacillus sphaericus (Bacillus sphaericus).